Consider the following 406-residue polypeptide: Enoyl-[acyl-carrier-protein] reductase [NADH] (406 aa).

Residues 48 to 53, 74 to 75, 111 to 112, and 140 to 141 contribute to the NAD(+) site; these read GASTGF, FE, DA, and IA. Tyrosine 226 is a substrate binding site. Catalysis depends on tyrosine 236, which acts as the Proton donor. NAD(+) contacts are provided by residues lysine 245 and 275-277; that span reads LVT.

It belongs to the TER reductase family. Monomer.

The enzyme catalyses a 2,3-saturated acyl-[ACP] + NAD(+) = a (2E)-enoyl-[ACP] + NADH + H(+). The protein operates within lipid metabolism; fatty acid biosynthesis. In terms of biological role, involved in the final reduction of the elongation cycle of fatty acid synthesis (FAS II). Catalyzes the reduction of a carbon-carbon double bond in an enoyl moiety that is covalently linked to an acyl carrier protein (ACP). This Coxiella burnetii (strain RSA 331 / Henzerling II) protein is Enoyl-[acyl-carrier-protein] reductase [NADH].